We begin with the raw amino-acid sequence, 949 residues long: MLGSFAKKIFGSANERRLKSYRPKVAAINALEPEWLKLSNEELAAKTVAFREELAQGKSLDDLLVPAFATVREAARRVLGQRHFDVQLIGGMVLHEGAIAEMRTGEGKTLVATLATYLNALAGKGVHVITVNDYLARRDAEWMGRVYQFLGLTTGIIVHGVDDGERARSYAADITYGTNNEFGFDYLRDNMKYELSQMVQRGHSFAIVDEVDSILIDEARTPLIISGPSDDKSELYNTIDKVMPRLQPEDFEVDEKQRSTNLTERGNEHIEDLLRAAGVEIEGSLYEAANVTIVHHVNQALRAHKLFQRDKDYIVRNGEVVIIDEFTGRMMPGRRYSEGLHQALEAKEHVQVQPENVTLASITFQNYFRLYSKLAGMTGTASTEADEFAEIYKLDVVDIPTNLPVCRLDEDDEVYRSAEEKLRAIVREIEAANAKMQPMLVGTTSIEKSEQLAEAMKSHGYKQIDFAEPRALDKLYAAARAEKPSKLFAVLNARFHEQEAYIVAEAGVPGAITIATNMAGRGTDIKLGGNVDMRVAQECADLEPGEARDAKDAQIRAEVDDFKAKAIAAGGLYIIGTERHESRRIDNQLRGRAGRQGDPGRSKFFLSLKDDLMRIFGSDRMESMLVKLGLKEDEAIVHSWINKALEKAQQKVEARNFDMRKNILKYDNVMNDQRKVVFEQRREMMAKPSLEEMIDDMRQGVVDDLIARHIPRDAYPEAWDSEGLREGVKTSLNIDLPIVEWAKEEGITEDDMRERLQKAADEAYAARVERNGVDVTRYVEKQIVLQALDHLWREHLLTLDHLRQVVGWRGMAQRDPLNEYKSEAFQLFDELIAQLREATTAQLSRVEVAFEPPPGENGFSGGMQEISGPQGGSSGGPIFQEALSAAAFAPPPLAPLEFSDESGSTATLARPAQSASRDEPAGGYAKVGRNQPCPCGSGKKYKHCHGALT.

ATP contacts are provided by residues glutamine 87, 105–109 (GEGKT), and aspartate 524. 2 disordered regions span residues 852–876 (PPPGENGFSGGMQEISGPQGGSSGG) and 896–939 (LEFS…GSGK). Residues cysteine 933, cysteine 935, cysteine 944, and histidine 945 each coordinate Zn(2+).

Belongs to the SecA family. As to quaternary structure, monomer and homodimer. Part of the essential Sec protein translocation apparatus which comprises SecA, SecYEG and auxiliary proteins SecDF-YajC and YidC. Zn(2+) is required as a cofactor.

The protein resides in the cell inner membrane. It localises to the cytoplasm. The enzyme catalyses ATP + H2O + cellular proteinSide 1 = ADP + phosphate + cellular proteinSide 2.. Its function is as follows. Part of the Sec protein translocase complex. Interacts with the SecYEG preprotein conducting channel. Has a central role in coupling the hydrolysis of ATP to the transfer of proteins into and across the cell membrane, serving both as a receptor for the preprotein-SecB complex and as an ATP-driven molecular motor driving the stepwise translocation of polypeptide chains across the membrane. This is Protein translocase subunit SecA from Methylocella silvestris (strain DSM 15510 / CIP 108128 / LMG 27833 / NCIMB 13906 / BL2).